A 296-amino-acid polypeptide reads, in one-letter code: MQDRFIKCIAQLPKPLSDALIPLLNADFAGHIDAQQLGMLTTKSQLEESELLLALLPIAAALAKPPISEFYVGAIAKGKSGDIYMGANLELSGEALFHSVHAEQSAISHAWLSGETQILDVVVNFSPCGHCRQFMNEMVEGQKVVIHLPEQKAQPLAHYLPYAFGPSNLNITEPLLSKQQHELSLDSSDPMIIEALDHASLSYAPYSNSYAAVVLETKDGATYCGRYAENAAFNPSMLPMQMALSTMTRHNREFTEINRAVLIESAQGKISLVGATMDALHAVAAVELEHIVIDPA.

2 CMP/dCMP-type deaminase domains span residues 47-167 (EESE…FGPS) and 186-296 (DSSD…IDPA). 88 to 90 (NLE) contributes to the substrate binding site. A Zn(2+)-binding site is contributed by histidine 101. The active-site Proton donor is the glutamate 103. Positions 128 and 131 each coordinate Zn(2+).

The protein belongs to the cytidine and deoxycytidylate deaminase family. Homodimer. Zn(2+) is required as a cofactor.

It catalyses the reaction cytidine + H2O + H(+) = uridine + NH4(+). The catalysed reaction is 2'-deoxycytidine + H2O + H(+) = 2'-deoxyuridine + NH4(+). Functionally, this enzyme scavenges exogenous and endogenous cytidine and 2'-deoxycytidine for UMP synthesis. The protein is Cytidine deaminase of Shewanella woodyi (strain ATCC 51908 / MS32).